The sequence spans 205 residues: RNA pyrophosphohydrolase (205 aa).

In terms of domain architecture, Nudix hydrolase spans 6–149 (GFRPNVGIVL…KRGVYARALR (144 aa)). Positions 38 to 59 (GGMNTDETPVEAMYRELREETG) match the Nudix box motif. The disordered stretch occupies residues 177 to 205 (PGSSAAGHDSPRKRPRKRSGARPMRINND). Residues 187–196 (PRKRPRKRSG) are compositionally biased toward basic residues.

This sequence belongs to the Nudix hydrolase family. RppH subfamily. A divalent metal cation is required as a cofactor.

Accelerates the degradation of transcripts by removing pyrophosphate from the 5'-end of triphosphorylated RNA, leading to a more labile monophosphorylated state that can stimulate subsequent ribonuclease cleavage. This is RNA pyrophosphohydrolase from Xanthomonas oryzae pv. oryzae (strain MAFF 311018).